A 291-amino-acid polypeptide reads, in one-letter code: Mitochondrial thiamine pyrophosphate carrier 1 (291 aa).

6 consecutive transmembrane segments (helical) span residues 12-31 (GATA…GAVA), 83-99 (IMYI…YSMF), 120-141 (SLIV…FDLL), 167-191 (GGLA…GLMF), 214-230 (FCGF…TFPL), and 265-282 (GFGI…VSLF). 3 Solcar repeats span residues 15–102 (ASVY…FSKA), 115–200 (RPSN…AREV), and 207–290 (NIPF…VLNG).

It belongs to the mitochondrial carrier (TC 2.A.29) family.

It localises to the mitochondrion inner membrane. Mitochondrial transporter that mediates uptake of thiamine pyrophosphate (ThPP) into mitochondria. This is Mitochondrial thiamine pyrophosphate carrier 1 (TPC1) from Meyerozyma guilliermondii (strain ATCC 6260 / CBS 566 / DSM 6381 / JCM 1539 / NBRC 10279 / NRRL Y-324) (Yeast).